We begin with the raw amino-acid sequence, 289 residues long: Rhomboid-type serine protease 2 (289 aa).

6 helical membrane passes run 26 to 46, 67 to 87, 100 to 120, 122 to 142, 157 to 179, and 184 to 203; these read VVII…VDIQ, FPFI…LTPL, CLAL…IGLE, FVFG…LLLG, IGTY…AVLV, and FWGH…SSTL. The active-site Nucleophile is the Ser134. His187 is a catalytic residue.

Belongs to the peptidase S54 family.

The protein localises to the golgi apparatus membrane. It localises to the golgi apparatus. The protein resides in the cis-Golgi network membrane. The enzyme catalyses Cleaves type-1 transmembrane domains using a catalytic dyad composed of serine and histidine that are contributed by different transmembrane domains.. Functionally, probable rhomboid-type serine protease that catalyzes intramembrane proteolysis. This Podospora anserina (Pleurage anserina) protein is Rhomboid-type serine protease 2 (RBD2).